Consider the following 804-residue polypeptide: Enhancer of polycomb homolog 2 (804 aa).

Disordered regions lie at residues Gln-372–Pro-395, Gly-484–Cys-508, Gln-603–Met-624, and Pro-646–Ser-669. 2 stretches are compositionally biased toward polar residues: residues Ser-611–Met-624 and Asp-654–Ser-669.

It belongs to the enhancer of polycomb family.

The protein localises to the nucleus. Its function is as follows. May play a role in transcription or DNA repair. The polypeptide is Enhancer of polycomb homolog 2 (epc2) (Xenopus laevis (African clawed frog)).